The chain runs to 107 residues: U1-lycotoxin-Ls1q (107 aa).

Positions 1 to 20 are cleaved as a signal peptide; the sequence is MMKVLVVVALLVTLISYSSS. Residues 21–41 constitute a propeptide that is removed on maturation; the sequence is EGIDDLEADELLSLMANEQTR. 4 disulfide bridges follow: C44–C59, C51–C68, C58–C86, and C70–C84.

This sequence belongs to the neurotoxin 19 (CSTX) family. 04 (U1-Lctx) subfamily. Expressed by the venom gland.

The protein resides in the secreted. This is U1-lycotoxin-Ls1q from Lycosa singoriensis (Wolf spider).